Reading from the N-terminus, the 438-residue chain is Glutaryl-CoA dehydrogenase, mitochondrial (438 aa).

A mitochondrion-targeting transit peptide spans methionine 1–serine 44. Substrate contacts are provided by residues arginine 138–serine 139 and serine 186. FAD is bound by residues phenylalanine 177–serine 186, serine 186, and tryptophan 212–threonine 214. Lysine 240 is modified (N6-acetyllysine). Residue phenylalanine 287 to arginine 294 participates in substrate binding. FAD contacts are provided by residues arginine 319, glutamine 330, and aspartate 387–glycine 391. Glutamate 414 (proton acceptor) is an active-site residue. Residue glycine 415 participates in substrate binding. FAD contacts are provided by residues threonine 416, threonine 416 to aspartate 418, and phenylalanine 434.

It belongs to the acyl-CoA dehydrogenase family. Homotetramer. It depends on FAD as a cofactor.

It is found in the mitochondrion matrix. The catalysed reaction is glutaryl-CoA + oxidized [electron-transfer flavoprotein] + 2 H(+) = (2E)-butenoyl-CoA + reduced [electron-transfer flavoprotein] + CO2. It functions in the pathway amino-acid metabolism; lysine degradation. The protein operates within amino-acid metabolism; tryptophan metabolism. In terms of biological role, catalyzes the oxidative decarboxylation of glutaryl-CoA to crotonyl-CoA and CO(2) in the degradative pathway of L-lysine, L-hydroxylysine, and L-tryptophan metabolism. It uses electron transfer flavoprotein as its electron acceptor. The sequence is that of Glutaryl-CoA dehydrogenase, mitochondrial (GCDH) from Macaca fascicularis (Crab-eating macaque).